The chain runs to 219 residues: uncharacterized protein (219 aa).

This sequence to T.pallidum TP_0126.

This is an uncharacterized protein from Treponema pallidum (strain Nichols).